Reading from the N-terminus, the 528-residue chain is MQQNTSLYDSLNVTAAASTSEIKKAYRNAALKYHPDKNNHTEESKRKFQEICQAYEILKDNRLRALYDQYGTTDEVLIQEQQAQAQRQQAGPFSSSSNFDTEAMSFPDLSPGDLFAQFFNSSATPSSNGSKSSFNFSFNNSSTPSFSFVNGSGVNNLYSSSAKYNSNDEDHHLDRGPDIKHNLKCTLKELYMGKTAKLGLNRTRICSVCDGHGGLKKCTCKTCKGQGIQTQTRRMGPLVQSWSQTCADCGGAGVFVKNKDICQQCQGLGFIKERKILQVTVQPGSCHNQLIVLTGEGDEVISTKGGGHEKVIPGDVVITILRLKDPNFQVINYSNLICKKCKIDFMTSLCGGVVYIEGHPSGKLIKLDIIPGEILKPGCFKTVEDMGMPKFINGVRSGFGHLYVKFDVTYPERLEPENAKKIQNILANDKYIKAERSTMETADSDCYCDLEKSYDSVEEHVLSSFEAPNLNNEVIEDDDLGDLINERDSRKRNNRRFDESNINNNNETKRNKYSSPVSGFYDHDINGY.

The region spanning 4–73 (NTSLYDSLNV…RALYDQYGTT (70 aa)) is the J domain. A CR-type zinc finger spans residues 193 to 274 (GKTAKLGLNR…CQGLGFIKER (82 aa)). CXXCXGXG motif repeat units lie at residues 206-213 (CSVCDGHG), 218-225 (CTCKTCKG), 246-253 (CADCGGAG), and 262-269 (CQQCQGLG). The segment covering 485 to 499 (NERDSRKRNNRRFDE) has biased composition (basic and acidic residues). Residues 485–528 (NERDSRKRNNRRFDESNINNNNETKRNKYSSPVSGFYDHDINGY) are disordered.

The protein localises to the cytoplasm. It is found in the nucleus. Putative chaperone involved in protein folding. Interferes with propagation of [PSI+] prion when overproduced. The chain is J domain-containing protein APJ1 (APJ1) from Saccharomyces cerevisiae (strain ATCC 204508 / S288c) (Baker's yeast).